A 253-amino-acid polypeptide reads, in one-letter code: Nurim homolog (253 aa).

Over 1–2 (MA) the chain is Nuclear. A helical membrane pass occupies residues 3-30 (TFAKVMLLLSSVATFGYTFFVVGKLMLF). The Perinuclear space portion of the chain corresponds to 31–56 (LSTPRSISKAHTWIFNLLDNKSRLET). A helical transmembrane segment spans residues 57–78 (AYGPIVFDTLYLIGFIFQHSFL). Residues 79–96 (KSALVKNLWRKLGLAAAE) are Nuclear-facing. A helical membrane pass occupies residues 97 to 113 (RTIYSLTSSICLHYLLK). Residues 114–132 (NWLPAQSIVLWQVDVDESA) are Perinuclear space-facing. Residues 133–161 (PLWWTFVVTHGLGWAVIFGGSLIMDLPEL) traverse the membrane as a helical segment. Residues 162 to 188 (LGVKQVYYDLKEYGEPVAYKSSELRNL) are Nuclear-facing. Residues 189–207 (YSHVRHPSFVGLSVILFAT) form a helical membrane-spanning segment. Topologically, residues 208-213 (NVMSLD) are perinuclear space. The chain crosses the membrane as a helical span at residues 214-231 (RLLLASLLTVYMYVAWST). Over 232–253 (DDKDVAYQKQQLRNKKHELKAQ) the chain is Nuclear.

It belongs to the nurim family.

Its subcellular location is the nucleus inner membrane. This Drosophila pseudoobscura pseudoobscura (Fruit fly) protein is Nurim homolog (nrm).